Reading from the N-terminus, the 1014-residue chain is Chondroitin sulfate ABC exolyase (1014 aa).

Residues 1–14 (MLILSFLCPAFLNA) form the signal peptide. Ca(2+) is bound by residues S24, E26, D50, H53, and D161. Catalysis depends on proton acceptor residues H345 and H454. The active-site Proton donor is Y461.

The protein belongs to the polysaccharide lyase 8 family. As to quaternary structure, monomer. The cofactor is Ca(2+). Mg(2+) is required as a cofactor.

It localises to the periplasm. It carries out the reaction Exolytic removal of Delta(4)-unsaturated disaccharide residues from the non-reducing ends of both polymeric chondroitin/dermatan sulfates and their oligosaccharide fragments.. Specific activity for chondroitin sulfate substrates increases moderately (2-fold) while an increase of 25-fold is observed for dermatan sulfate as substrate upon addition of Ca(2+) or Mg(2+) ions. Increasing the concentration of Na(+), K(+) or Cs(+) chloride from 0 to 0.1 M, increases the activity against all substrates. Further increases in salt concentration reduces the activity dramatically, with 50% inhibition occurring at 0.15 M and nearly complete inhibition at 0.4 M salt. The addition of 10 mM Ca(2+) or Mg(2+) ions increases the activity against chondroitin 4- and 6-sulfates by 2-3-fold, while the activity against dermatan sulfate increases much more significantly by 50-fold. Addition of Mn(2+) and Zn(2+) reduces activity against chondroitin sulfate substrates, but increases the activity against dermatan sulfate. Increasing the concentration of CaCl(2) with both chondroitin 4- and 6-sulfates from 0 to 0.04 M increases the activity. A further increase reduces activity, with 50% inhibition at 0.065-0.085 M and a complete inhibition of the reaction at 0.2 M. In case of dermatan sulfate, the addition of low concentration of CaCl(2) dramatically increases the activity from the basal level. The maximal activity is reached at 0.01 M CaCl(2). Its function is as follows. Broad-specificity glycosaminoglycan lyase, which acts in an exolytic fashion degrading chondroitin sulfates and dermatan sulfate to yield only disaccharide products. Has a preference for chondroitin 4-sulfate over chondroitin 6-sulfate. Has extremely low activity against hyaluronic acid. Is not active against acharan sulfate, heparin or heparan sulfate. This is Chondroitin sulfate ABC exolyase (chonabc) from Bacteroides thetaiotaomicron.